A 353-amino-acid chain; its full sequence is uncharacterized protein (353 aa).

Residues 267-287 (GLPLVVIEAMAFGLPIVAFNC) form a helical membrane-spanning segment.

Belongs to the glycosyltransferase group 1 family. Glycosyltransferase 4 subfamily.

The protein localises to the membrane. This is an uncharacterized protein from Haemophilus influenzae (strain ATCC 51907 / DSM 11121 / KW20 / Rd).